The following is a 204-amino-acid chain: MSLPGKFITLEGVDGAGKSTHVGFVAEWLRGQGREVIVTREPGGTALGETLRELLLHREMAADTELLLMFAARQQHLAELILPALARGAWVVSDRFTDASYAYQCGGRRIAAERIAALEDWVQRGFAPDLTLLFDVPPAVAEERRSSVRAADRFEQEAGSFFARVRDAYLVRARAEPHRIHVLDARQTIDAVQAEIARLLQDLT.

12-19 (GVDGAGKS) is an ATP binding site.

This sequence belongs to the thymidylate kinase family.

The enzyme catalyses dTMP + ATP = dTDP + ADP. In terms of biological role, phosphorylation of dTMP to form dTDP in both de novo and salvage pathways of dTTP synthesis. This Thiobacillus denitrificans (strain ATCC 25259 / T1) protein is Thymidylate kinase.